We begin with the raw amino-acid sequence, 515 residues long: 2-isopropylmalate synthase (515 aa).

Residues 4-266 form the Pyruvate carboxyltransferase domain; the sequence is IKFFDTTLRD…ETRLNLQEIK (263 aa). Residues aspartate 13, histidine 201, histidine 203, and asparagine 237 each contribute to the Mn(2+) site. Positions 391–515 are regulatory domain; the sequence is QLSSIQVQYG…RAENEKVATS (125 aa).

The protein belongs to the alpha-IPM synthase/homocitrate synthase family. LeuA type 1 subfamily. Homodimer. It depends on Mn(2+) as a cofactor.

The protein localises to the cytoplasm. The catalysed reaction is 3-methyl-2-oxobutanoate + acetyl-CoA + H2O = (2S)-2-isopropylmalate + CoA + H(+). It participates in amino-acid biosynthesis; L-leucine biosynthesis; L-leucine from 3-methyl-2-oxobutanoate: step 1/4. Functionally, catalyzes the condensation of the acetyl group of acetyl-CoA with 3-methyl-2-oxobutanoate (2-ketoisovalerate) to form 3-carboxy-3-hydroxy-4-methylpentanoate (2-isopropylmalate). The protein is 2-isopropylmalate synthase of Geobacillus stearothermophilus (Bacillus stearothermophilus).